The chain runs to 417 residues: C4-dicarboxylate transport protein (417 aa).

Helical transmembrane passes span 4–26 (IYVQ…PQIG), 41–60 (KLVI…ARMG), 72–94 (ALIY…GRLI), 137–159 (FIGA…TGFA), 180–202 (LFFG…AMGF), 217–239 (ALVA…GIAW), 285–307 (VVGL…YMTL), and 347–369 (FITL…AILV).

The protein belongs to the dicarboxylate/amino acid:cation symporter (DAACS) (TC 2.A.23) family.

The protein resides in the cell inner membrane. In terms of biological role, responsible for the transport of dicarboxylates such as succinate, fumarate, and malate from the periplasm across the membrane. The polypeptide is C4-dicarboxylate transport protein (Caulobacter vibrioides (strain ATCC 19089 / CIP 103742 / CB 15) (Caulobacter crescentus)).